The sequence spans 164 residues: UPF0114 protein YqhA (164 aa).

3 helical membrane passes run 10-32 (YASR…ALAL), 53-75 (LILV…MVMF), and 136-155 (LMWY…VMGY).

The protein belongs to the UPF0114 family.

The protein localises to the cell membrane. This Shigella flexneri protein is UPF0114 protein YqhA.